The primary structure comprises 455 residues: Epoxide hydrolase 1 (455 aa).

A helical; Signal-anchor for type III membrane protein membrane pass occupies residues Met-1–Arg-21. The Cytoplasmic segment spans residues Asp-22–Gln-455. Catalysis depends on Asp-226, which acts as the Nucleophile. Dimethylated arginine is present on Arg-295. Catalysis depends on Tyr-374, which acts as the Proton donor. Residue His-431 is the Proton acceptor of the active site. An N6-acetyllysine modification is found at Lys-439.

The protein belongs to the peptidase S33 family.

Its subcellular location is the microsome membrane. The protein localises to the endoplasmic reticulum membrane. It catalyses the reaction cis-stilbene oxide + H2O = (1R,2R)-hydrobenzoin. The catalysed reaction is 1-(4-methoxyphenyl)-N-methyl-N-[(3-methyloxetan-3-yl)methyl]methanamine + H2O = 2-{[(4-methoxybenzyl)(methyl)amino]methyl}-2-methylpropane-1,3-diol. The enzyme catalyses 8,9-epoxy-(5Z,11Z,14Z)-eicosatrienoate + H2O = 8,9-dihydroxy-(5Z,11Z,14Z)-eicosatrienoate. It carries out the reaction 11,12-epoxy-(5Z,8Z,14Z)-eicosatrienoate + H2O = 11,12-dihydroxy-(5Z,8Z,14Z)-eicosatrienoate. It catalyses the reaction 2-(5Z,8Z,11Z,14Z-eicosatetraenoyl)-glycerol + H2O = glycerol + (5Z,8Z,11Z,14Z)-eicosatetraenoate + H(+). Inhibited by 10-hydroxystearamide and methoxy-arachidonyl fluorophosphate. In terms of biological role, biotransformation enzyme that catalyzes the hydrolysis of arene and aliphatic epoxides to less reactive and more water soluble dihydrodiols by the trans addition of water. May play a role in the metabolism of endogenous lipids such as epoxide-containing fatty acids. Metabolizes the abundant endocannabinoid 2-arachidonoylglycerol (2-AG) to free arachidonic acid (AA) and glycerol. Binds 20(S)-hydroxycholesterol (20(S)-OHC). The protein is Epoxide hydrolase 1 of Mus musculus (Mouse).